A 41-amino-acid polypeptide reads, in one-letter code: Large ribosomal subunit protein bL36 (41 aa).

It belongs to the bacterial ribosomal protein bL36 family.

The protein is Large ribosomal subunit protein bL36 of Xylella fastidiosa (strain 9a5c).